The following is a 200-amino-acid chain: Ras-related protein Rab-10 (200 aa).

The GTP site is built by S18, G19, V20, G21, K22, T23, C24, N35, T36, S40, and T41. Residue T23 coordinates Mg(2+). 2 short sequence motifs (switch) span residues 32-46 (DAFN…GIDF) and 64-81 (DTAG…YYRG). Mg(2+) is bound by residues T41 and D64. G67 lines the GTP pocket. At T73 the chain carries Phosphothreonine; by LRRK2. Position 102 is an N6-acetyllysine (K102). Residue K102 forms a Glycyl lysine isopeptide (Lys-Gly) (interchain with G-Cter in ubiquitin) linkage. Positions 122, 123, 125, and 126 each coordinate GTP. A Glycyl lysine isopeptide (Lys-Gly) (interchain with G-Cter in ubiquitin) cross-link involves residue K136. Residues S152, A153, and K154 each coordinate GTP. K154 participates in a covalent cross-link: Glycyl lysine isopeptide (Lys-Gly) (interchain with G-Cter in ubiquitin). 2 S-geranylgeranyl cysteine lipidation sites follow: C199 and C200.

It belongs to the small GTPase superfamily. Rab family. In terms of assembly, interacts with MYO5A; mediates the transport to the plasma membrane of SLC2A4/GLUT4 storage vesicles. Interacts with GDI1 and with GDI2; negatively regulates RAB10 association with membranes and activation. Interacts (GDP-bound form) with LLGL1; the interaction is direct and promotes RAB10 association with membranes and activation through competition with the Rab inhibitor GDI1. Interacts with EXOC4; probably associates with the exocyst. Interacts (GTP-bound form) with MICALCL, MICAL1, MICAL3, EHBP1 and EHBP1L1; at least in case of MICAL1 two molecules of RAB10 can bind to one molecule of MICAL1. Interacts with TBC1D13. Interacts with SEC16A. Interacts with CHM and CHML. Interacts with LRRK2; interaction facilitates phosphorylation of Thr-73. Interacts (when phosphorylated on Thr-73) with RILPL1 and RILPL2. Interacts with TBC1D21. Interacts with MARCKS. Mg(2+) is required as a cofactor. Ubiquitinated upon Legionella pneumophila infection. Ubiquitination does not lead to proteasomal degradation. Post-translationally, phosphorylation of Thr-73 in the switch II region by LRRK2 prevents the association of dRAB regulatory proteins, including CHM, CHML and RAB GDP dissociation inhibitors GDI1 and GDI2. Phosphorylation of Thr-73 by LRRK2 is stimulated by RAB29 and RAB32. Phosphorylation by LRRK2 is required for localization to stressed lysosomes. As to expression, expressed in the hippocampus. Expressed in neutrophils (at protein level). Expressed in the testis (at protein level).

The protein resides in the cytoplasmic vesicle membrane. It localises to the golgi apparatus membrane. Its subcellular location is the golgi apparatus. It is found in the trans-Golgi network membrane. The protein localises to the endosome membrane. The protein resides in the recycling endosome membrane. It localises to the cytoplasmic vesicle. Its subcellular location is the phagosome membrane. It is found in the cytoplasm. The protein localises to the cytoskeleton. The protein resides in the cilium basal body. It localises to the endoplasmic reticulum membrane. Its subcellular location is the perinuclear region. It is found in the lysosome. The enzyme catalyses GTP + H2O = GDP + phosphate + H(+). Its activity is regulated as follows. Regulated by guanine nucleotide exchange factors (GEFs) DENND4C and RABIF which promote the exchange of bound GDP for free GTP. Regulated by GTPase activating proteins (GAPs) including TBC1D21 which increase the GTP hydrolysis activity. Inhibited by GDP dissociation inhibitors GDI1 and GDI2 which prevent Rab-GDP dissociation. The small GTPases Rab are key regulators of intracellular membrane trafficking, from the formation of transport vesicles to their fusion with membranes. Rabs cycle between an inactive GDP-bound form and an active GTP-bound form that is able to recruit to membranes different set of downstream effectors directly responsible for vesicle formation, movement, tethering and fusion. That Rab is mainly involved in the biosynthetic transport of proteins from the Golgi to the plasma membrane. Regulates, for instance, SLC2A4/GLUT4 glucose transporter-enriched vesicles delivery to the plasma membrane. In parallel, it regulates the transport of TLR4, a toll-like receptor to the plasma membrane and therefore may be important for innate immune response. Also plays a specific role in asymmetric protein transport to the plasma membrane. In neurons, it is involved in axonogenesis through regulation of vesicular membrane trafficking toward the axonal plasma membrane. In epithelial cells, it regulates transport from the Golgi to the basolateral membrane. May play a role in the basolateral recycling pathway and in phagosome maturation. May play a role in endoplasmic reticulum dynamics and morphology controlling tubulation along microtubules and tubules fusion. Together with LRRK2, RAB8A, and RILPL1, it regulates ciliogenesis. When phosphorylated by LRRK2 on Thr-73, binds RILPL1 and inhibits ciliogenesis. Participates in the export of a subset of neosynthesized proteins through a Rab8-Rab10-Rab11-dependent endososomal export route. Targeted to and stabilized on stressed lysosomes through LRRK2 phosphorylation where it promotes the extracellular release of lysosomal content through EHBP1 and EHNP1L1 effector proteins. In terms of biological role, (Microbial infection) Upon Legionella pneumophila infection promotes endoplasmic reticulum recruitment and bacterial replication. Plays a role in remodeling the Legionella-containing vacuole (LCV) into an endoplasmic reticulum-like vacuole. This is Ras-related protein Rab-10 from Homo sapiens (Human).